The chain runs to 292 residues: Protease HtpX (292 aa).

2 consecutive transmembrane segments (helical) span residues 5-25 (IFLFLLTNLAVLMLAGIVMSL) and 34-54 (SGLLVMAAIFGFGGSFISLLL). H140 contributes to the Zn(2+) binding site. Residue E141 is part of the active site. H144 serves as a coordination point for Zn(2+). 2 helical membrane-spanning segments follow: residues 155–175 (LLQGVLNTFVIVLARVVGGII) and 193–213 (IIVFALEMVFGLFATMIAMWF). Zn(2+) is bound at residue E218.

The protein belongs to the peptidase M48B family. Zn(2+) serves as cofactor.

The protein resides in the cell inner membrane. The protein is Protease HtpX of Xanthomonas euvesicatoria pv. vesicatoria (strain 85-10) (Xanthomonas campestris pv. vesicatoria).